A 681-amino-acid chain; its full sequence is Elongation factor G (681 aa).

One can recognise a tr-type G domain in the interval 5 to 279; that stretch reads KNIRNIGIIA…SIVNFLPSPI (275 aa). GTP-binding positions include 14-21, 82-86, and 136-139; these read AHVDAGKT, DTPGH, and NKLD.

Belongs to the TRAFAC class translation factor GTPase superfamily. Classic translation factor GTPase family. EF-G/EF-2 subfamily.

Its subcellular location is the cytoplasm. Its function is as follows. Catalyzes the GTP-dependent ribosomal translocation step during translation elongation. During this step, the ribosome changes from the pre-translocational (PRE) to the post-translocational (POST) state as the newly formed A-site-bound peptidyl-tRNA and P-site-bound deacylated tRNA move to the P and E sites, respectively. Catalyzes the coordinated movement of the two tRNA molecules, the mRNA and conformational changes in the ribosome. The protein is Elongation factor G of Carsonella ruddii (strain PV).